Here is a 339-residue protein sequence, read N- to C-terminus: NADH-quinone oxidoreductase subunit H (339 aa).

9 helical membrane-spanning segments follow: residues 9-29, 50-70, 82-102, 115-135, 161-181, 187-207, 235-255, 275-295, and 311-331; these read IFPLIIIALKVVAITIPLILC, PNVVGPFGLLQPIADAVKLLF, ILFILAPMITFILSLIGWAVI, VGVLYILAISSLSVYGIIIAG, MGLVIITVLLTNGTLNLSGII, MPWWIDLMLLPMGVVFFISVL, MGFALFFLGEYANMILVSAMT, IPGFFWFVFKVGFLLFCFLWI, and GWKVFLPLTLFWVVLVSSVLV.

This sequence belongs to the complex I subunit 1 family. NDH-1 is composed of 14 different subunits. Subunits NuoA, H, J, K, L, M, N constitute the membrane sector of the complex.

Its subcellular location is the cell inner membrane. The enzyme catalyses a quinone + NADH + 5 H(+)(in) = a quinol + NAD(+) + 4 H(+)(out). In terms of biological role, NDH-1 shuttles electrons from NADH, via FMN and iron-sulfur (Fe-S) centers, to quinones in the respiratory chain. The immediate electron acceptor for the enzyme in this species is believed to be ubiquinone. Couples the redox reaction to proton translocation (for every two electrons transferred, four hydrogen ions are translocated across the cytoplasmic membrane), and thus conserves the redox energy in a proton gradient. This subunit may bind ubiquinone. This Rickettsia conorii (strain ATCC VR-613 / Malish 7) protein is NADH-quinone oxidoreductase subunit H.